The chain runs to 322 residues: Cytochrome f (322 aa).

Positions 1 to 36 are cleaved as a signal peptide; it reads MQKNRNTFSWVKEQMTRCISVSMMIYVITRASISNA. Tyr-37, Cys-57, Cys-60, and His-61 together coordinate heme. A helical transmembrane segment spans residues 288-308; sequence IQGLLFFLASVILAQIFLVLK.

Belongs to the cytochrome f family. The 4 large subunits of the cytochrome b6-f complex are cytochrome b6, subunit IV (17 kDa polypeptide, petD), cytochrome f and the Rieske protein, while the 4 small subunits are PetG, PetL, PetM and PetN. The complex functions as a dimer. The cofactor is heme.

The protein resides in the plastid. Its subcellular location is the chloroplast thylakoid membrane. Functionally, component of the cytochrome b6-f complex, which mediates electron transfer between photosystem II (PSII) and photosystem I (PSI), cyclic electron flow around PSI, and state transitions. The chain is Cytochrome f from Nymphaea alba (White water-lily).